We begin with the raw amino-acid sequence, 384 residues long: Alcohol dehydrogenase class-3 (384 aa).

Positions 48, 70, 100, 103, 106, 114, and 177 each coordinate Zn(2+).

It belongs to the zinc-containing alcohol dehydrogenase family. Class-III subfamily. Homodimer. Zn(2+) serves as cofactor.

It localises to the cytoplasm. It carries out the reaction a primary alcohol + NAD(+) = an aldehyde + NADH + H(+). It catalyses the reaction a secondary alcohol + NAD(+) = a ketone + NADH + H(+). The enzyme catalyses S-(hydroxymethyl)glutathione + NADP(+) = S-formylglutathione + NADPH + H(+). The catalysed reaction is S-(hydroxymethyl)glutathione + NAD(+) = S-formylglutathione + NADH + H(+). Functionally, class-III ADH is remarkably ineffective in oxidizing ethanol, but it readily catalyzes the oxidation of long-chain primary alcohols and the oxidation of S-(hydroxymethyl) glutathione. Plays a role in the calcium flux to the cytoplasm in the ASJ sensory neurons upon removal of a nitric oxide stimulus. In Caenorhabditis elegans, this protein is Alcohol dehydrogenase class-3.